The primary structure comprises 380 residues: S-adenosylmethionine synthase (380 aa).

Histidine 15 serves as a coordination point for ATP. Aspartate 17 contributes to the Mg(2+) binding site. Glutamate 43 is a K(+) binding site. 2 residues coordinate L-methionine: glutamate 56 and glutamine 99. The flexible loop stretch occupies residues 99–109; the sequence is QSPDIAMGIDN. Residues 164–166, 230–231, aspartate 239, 245–246, and lysine 266 contribute to the ATP site; these read DAK, RF, and RK. Residue aspartate 239 coordinates L-methionine. Residue lysine 270 participates in L-methionine binding.

Belongs to the AdoMet synthase family. In terms of assembly, homotetramer; dimer of dimers. The cofactor is Mg(2+). K(+) serves as cofactor.

It is found in the cytoplasm. The catalysed reaction is L-methionine + ATP + H2O = S-adenosyl-L-methionine + phosphate + diphosphate. The protein operates within amino-acid biosynthesis; S-adenosyl-L-methionine biosynthesis; S-adenosyl-L-methionine from L-methionine: step 1/1. Functionally, catalyzes the formation of S-adenosylmethionine (AdoMet) from methionine and ATP. The overall synthetic reaction is composed of two sequential steps, AdoMet formation and the subsequent tripolyphosphate hydrolysis which occurs prior to release of AdoMet from the enzyme. The sequence is that of S-adenosylmethionine synthase from Rickettsia prowazekii (strain Madrid E).